A 499-amino-acid polypeptide reads, in one-letter code: Citrinin biosynthesis cluster MFS transporter mrr1 (499 aa).

Positions 1–29 (MKEEIDAPVSTDASGTDLENARDQPSGEK) are disordered. A run of 8 helical transmembrane segments spans residues 58–78 (SLIT…SSVF), 95–115 (VMTL…LVWG), 124–144 (LKPL…VAVA), 155–175 (FFLG…LADF), 187–207 (LFSA…GFIV), 215–235 (WTAW…FLTL), 291–311 (ILVC…LFFV), and 327–347 (GIAA…CLLV). The N-linked (GlcNAc...) asparagine glycan is linked to N361. The next 4 helical transmembrane spans lie at 370 to 390 (LPPM…FGWT), 395 to 415 (ISWA…LMIW), 443 to 463 (AVGA…GVDW), and 467 to 487 (LLGF…FYGA).

This sequence belongs to the major facilitator superfamily. CAR1 family.

It localises to the membrane. Its function is as follows. MFS transporter; part of the gene cluster that mediates the biosynthesis the mycotoxin citrinin, a hepato-nephrotoxic compound to humans due to inhibition of respiration complex III. The chain is Citrinin biosynthesis cluster MFS transporter mrr1 from Monascus ruber (Mold).